The sequence spans 386 residues: Citrate synthase (386 aa).

Residues H266 and D322 contribute to the active site.

Belongs to the citrate synthase family.

It carries out the reaction oxaloacetate + acetyl-CoA + H2O = citrate + CoA + H(+). It functions in the pathway carbohydrate metabolism; tricarboxylic acid cycle; isocitrate from oxaloacetate: step 1/2. The polypeptide is Citrate synthase (gltA) (Acidithiobacillus ferridurans).